We begin with the raw amino-acid sequence, 465 residues long: Ribulose bisphosphate carboxylase large chain (465 aa).

Position 4 is an N6,N6,N6-trimethyllysine (Lys-4). Substrate is bound by residues Asn-113 and Thr-163. Lys-165 functions as the Proton acceptor in the catalytic mechanism. A substrate-binding site is contributed by Lys-167. Residues Lys-191, Asp-193, and Glu-194 each contribute to the Mg(2+) site. Residue Lys-191 is modified to N6-carboxylysine. The active-site Proton acceptor is the His-284. Positions 285, 317, and 369 each coordinate substrate.

The protein belongs to the RuBisCO large chain family. Type I subfamily. As to quaternary structure, heterohexadecamer of 8 large chains and 8 small chains; disulfide-linked. The disulfide link is formed within the large subunit homodimers. The cofactor is Mg(2+). In terms of processing, the disulfide bond which can form in the large chain dimeric partners within the hexadecamer appears to be associated with oxidative stress and protein turnover.

The protein localises to the plastid. It is found in the chloroplast. The catalysed reaction is 2 (2R)-3-phosphoglycerate + 2 H(+) = D-ribulose 1,5-bisphosphate + CO2 + H2O. It carries out the reaction D-ribulose 1,5-bisphosphate + O2 = 2-phosphoglycolate + (2R)-3-phosphoglycerate + 2 H(+). Functionally, ruBisCO catalyzes two reactions: the carboxylation of D-ribulose 1,5-bisphosphate, the primary event in carbon dioxide fixation, as well as the oxidative fragmentation of the pentose substrate in the photorespiration process. Both reactions occur simultaneously and in competition at the same active site. The sequence is that of Ribulose bisphosphate carboxylase large chain from Clitoria ternatea (Butterfly pea).